A 207-amino-acid polypeptide reads, in one-letter code: Thiamine-phosphate synthase (207 aa).

Residues 36-40 and N68 contribute to the 4-amino-2-methyl-5-(diphosphooxymethyl)pyrimidine site; that span reads QLRMK. Mg(2+)-binding residues include D69 and D88. S106 contributes to the 4-amino-2-methyl-5-(diphosphooxymethyl)pyrimidine binding site. Residue 132-134 participates in 2-[(2R,5Z)-2-carboxy-4-methylthiazol-5(2H)-ylidene]ethyl phosphate binding; sequence TNT. K135 contributes to the 4-amino-2-methyl-5-(diphosphooxymethyl)pyrimidine binding site. Residues G162 and 182–183 each bind 2-[(2R,5Z)-2-carboxy-4-methylthiazol-5(2H)-ylidene]ethyl phosphate; that span reads VS.

It belongs to the thiamine-phosphate synthase family. Mg(2+) is required as a cofactor.

The catalysed reaction is 2-[(2R,5Z)-2-carboxy-4-methylthiazol-5(2H)-ylidene]ethyl phosphate + 4-amino-2-methyl-5-(diphosphooxymethyl)pyrimidine + 2 H(+) = thiamine phosphate + CO2 + diphosphate. The enzyme catalyses 2-(2-carboxy-4-methylthiazol-5-yl)ethyl phosphate + 4-amino-2-methyl-5-(diphosphooxymethyl)pyrimidine + 2 H(+) = thiamine phosphate + CO2 + diphosphate. It catalyses the reaction 4-methyl-5-(2-phosphooxyethyl)-thiazole + 4-amino-2-methyl-5-(diphosphooxymethyl)pyrimidine + H(+) = thiamine phosphate + diphosphate. The protein operates within cofactor biosynthesis; thiamine diphosphate biosynthesis; thiamine phosphate from 4-amino-2-methyl-5-diphosphomethylpyrimidine and 4-methyl-5-(2-phosphoethyl)-thiazole: step 1/1. Its function is as follows. Condenses 4-methyl-5-(beta-hydroxyethyl)thiazole monophosphate (THZ-P) and 2-methyl-4-amino-5-hydroxymethyl pyrimidine pyrophosphate (HMP-PP) to form thiamine monophosphate (TMP). The chain is Thiamine-phosphate synthase from Methanococcus maripaludis (strain C6 / ATCC BAA-1332).